Here is a 449-residue protein sequence, read N- to C-terminus: VIRF-1 (449 aa).

The segment at 1 to 60 (MDPGQRPNPFGAPGAIPKKPCLSQGSPGTSGSGAPCDEPSRSESPGEGPSGTGGSAAAGD) is disordered. The IRF tryptophan pentad repeat DNA-binding region spans 89–195 (KASIKDWIVC…HHFLVFRVRK (107 aa)). Residues Lys-406 and Lys-442 each carry the N6-propionyllysine; by host modification.

This sequence belongs to the IRF family. In terms of assembly, forms homodimers. Interacts with host IRF3, IRF7, and CREBBP. Interacts with host SYNCRIP. Interacts with host USP7. Interacts (via C-terminus) with host HERC5. Interacts with host GABARAPL1. Interacts with host SIRT6. In terms of processing, ISGylated. Propionylated in lysine residues Lys-406 and Lys-442, which is required for effective inhibition of IFN-beta production and antiviral signaling.

It is found in the host cytoplasm. Functionally, plays a role in the inhibition of host innate response by repressing the expression of interferon-inducible genes and blocking host IRF1- and IRF3-mediated transcription. Blocks the interaction between host IRF3 and CREBBP. Regulates the host cellular metabolism by increasing glucose uptake, ATP production and lactate secretion through down-regulation of heterogeneous nuclear ribonuclear protein Q1/SYNCRIP. Mechanistically, induces ubiquitination and degradation of SYNCRIP through the ubiquitin-proteasome pathway by recruiting KLHL3/CUL3 ubiquitin ligase complex. Disrupts host TP53 signaling pathway during viral infection by interacting with host USP7 and thereby decreasing the availability of USP7 for deubiquitinating and stabilizing TP53. Plays a role in the global inhibition of protein ISGylation by interacting with host HERC5 leading to its inhibition. Promotes its own propionylation by blocking SIRT6 interaction with ubiquitin-specific peptidase 10/USP10 leading to SIRT6 degradation via a ubiquitin-proteasome pathway. In turn, propionylation is required to block IRF3-CBP/p300 recruitment and to repress the STING DNA sensing pathway. Plays a role in the activation of mitophagy during infection via interaction with the host proteins NIX/BNIP3L, TUFM and GABARAPL1 thereby inhibiting antiviral responses and contributing to productive replication. In Homo sapiens (Human), this protein is VIRF-1 (vIRF-1).